A 362-amino-acid chain; its full sequence is Chorismate synthase (362 aa).

NADP(+) is bound by residues Arg-47 and Arg-53. FMN contacts are provided by residues 124–126 (RSS), Gly-285, 300–304 (KPTAT), and Arg-326.

Belongs to the chorismate synthase family. As to quaternary structure, homotetramer. The cofactor is FMNH2.

It carries out the reaction 5-O-(1-carboxyvinyl)-3-phosphoshikimate = chorismate + phosphate. Its pathway is metabolic intermediate biosynthesis; chorismate biosynthesis; chorismate from D-erythrose 4-phosphate and phosphoenolpyruvate: step 7/7. Catalyzes the anti-1,4-elimination of the C-3 phosphate and the C-6 proR hydrogen from 5-enolpyruvylshikimate-3-phosphate (EPSP) to yield chorismate, which is the branch point compound that serves as the starting substrate for the three terminal pathways of aromatic amino acid biosynthesis. This reaction introduces a second double bond into the aromatic ring system. This chain is Chorismate synthase, found in Cyanothece sp. (strain PCC 7425 / ATCC 29141).